Consider the following 238-residue polypeptide: Probable transcriptional regulatory protein Mmwyl1_2868 (238 aa).

It belongs to the TACO1 family.

It localises to the cytoplasm. The chain is Probable transcriptional regulatory protein Mmwyl1_2868 from Marinomonas sp. (strain MWYL1).